The primary structure comprises 317 residues: Heme A synthase (317 aa).

Topologically, residues 1–6 (MQRSLK) are cytoplasmic. The chain crosses the membrane as a helical span at residues 7–27 (WFASATTLAMLFVLIGGALVT). Topologically, residues 28 to 62 (KTGSGMGCGRSWPLCNGQWVPDHITPELIIELSHR) are extracellular. Cys35 and Cys42 are disulfide-bonded. The active site involves Glu58. Residue His61 coordinates heme o. The helical transmembrane segment at 63–83 (LVSGLAGIMVLILSIWAWRAI) threads the bilayer. Topologically, residues 84–90 (GHVQETK) are cytoplasmic. Residues 91–111 (FLAVISFVFLVLQGLIGAAAV) traverse the membrane as a helical segment. At 112 to 121 (VWGQSDFVLA) the chain is on the extracellular side. Residues 122–142 (LHFGISLISFAAVLLLTLLIF) form a helical membrane-spanning segment. A heme o-binding site is contributed by His123. Topologically, residues 143–159 (EIDKTFSAASLSLDGKM) are cytoplasmic. Residues 160-180 (RFHIYGITIYSYIVVYTGALV) form a helical membrane-spanning segment. Topologically, residues 181–211 (RHTNASLACPSWPLCAKTRLLPVQFHEWVQM) are extracellular. Cys189 and Cys195 are oxidised to a cystine. A helical transmembrane segment spans residues 212-232 (GHRLAAAVIIIWIAAAAIHAV). Heme b is bound at residue His213. The Cytoplasmic portion of the chain corresponds to 233-243 (RHYRRQPVIYY). Residues 244-264 (GWLIALLLVLAQMTTGALVVF) form a helical membrane-spanning segment. The Extracellular portion of the chain corresponds to 265–270 (TQLNLY). Residues 271–291 (IALAHAFFISCLFGVLSYLLL) form a helical membrane-spanning segment. His275 provides a ligand contact to heme b. Over 292–317 (LALRTRRAPVKAADHSAGEAAPATLK) the chain is Cytoplasmic.

Belongs to the COX15/CtaA family. Type 1 subfamily. As to quaternary structure, interacts with CtaB. Heme b serves as cofactor.

It is found in the cell membrane. The enzyme catalyses Fe(II)-heme o + 2 A + H2O = Fe(II)-heme a + 2 AH2. Its pathway is porphyrin-containing compound metabolism; heme A biosynthesis; heme A from heme O: step 1/1. Catalyzes the conversion of heme O to heme A by two successive hydroxylations of the methyl group at C8. The first hydroxylation forms heme I, the second hydroxylation results in an unstable dihydroxymethyl group, which spontaneously dehydrates, resulting in the formyl group of heme A. The sequence is that of Heme A synthase from Geobacillus kaustophilus (strain HTA426).